Here is a 123-residue protein sequence, read N- to C-terminus: Steroid Delta-isomerase (123 aa).

The active-site Proton donor is the Tyr12. The active-site Proton acceptor is the Asp36. Asp96 lines the substrate pocket.

Homodimer.

It catalyses the reaction a 3-oxo-Delta(5)-steroid = a 3-oxo-Delta(4)-steroid. The polypeptide is Steroid Delta-isomerase (ksdI) (Nocardioides simplex (Arthrobacter simplex)).